Reading from the N-terminus, the 279-residue chain is Four and a half LIM domains protein 2 (279 aa).

The C4-type zinc finger occupies 7 to 31 (CHHCNESLYGKKYILKEENPHCVAC). LIM zinc-binding domains lie at 40–92 (CEEC…CTDC), 101–153 (CQEC…CVPC), and 162–212 (CVQC…CLTC). Lys78 is covalently cross-linked (Glycyl lysine isopeptide (Lys-Gly) (interchain with G-Cter in SUMO2)). Residues Lys167 and Lys220 each participate in a glycyl lysine isopeptide (Lys-Gly) (interchain with G-Cter in SUMO2) cross-link. One can recognise an LIM zinc-binding 4 domain in the interval 221 to 275 (CAGCTNPISGLGGTKYISFEERQWHNDCFNCKKCSLSLVGRGFLTERDDILCPDC). At Ser238 the chain carries Phosphoserine.

Interacts with ZNF638 and TTN/titin. Interacts with E4F1. Interacts with GRB7. Interacts with SIRT1 and FOXO1. Interacts with CEFIP and calcineurin. Interacts with FOXK1. Expressed in heart only (at protein level).

It localises to the cytoplasm. Its subcellular location is the nucleus. It is found in the myofibril. The protein resides in the sarcomere. The protein localises to the z line. May function as a molecular transmitter linking various signaling pathways to transcriptional regulation. Negatively regulates the transcriptional repressor E4F1 and may function in cell growth. Inhibits the transcriptional activity of FOXO1 and its apoptotic function by enhancing the interaction of FOXO1 with SIRT1 and FOXO1 deacetylation. Negatively regulates the calcineurin/NFAT signaling pathway in cardiomyocytes. This is Four and a half LIM domains protein 2 (Fhl2) from Rattus norvegicus (Rat).